The chain runs to 213 residues: MDSEKILNAVKEARTLAKPRNFTQSVDLIVNLKELDLSRPENRLKEQIVLPSGRGKDVAIAVIAKGDLAAQAEEMGLTVIRQEELEELGKNKKTAKKIANAHGFFIAQADMMPLVGKSLGPVLGPRGKMPQPVPGNANLAPLVARFQKTVSINTRDKALFQVYIGHESMSDDELAANAEAILNVVSRKYEKGLYHVKSAFTKLTMGAAAPIEK.

Belongs to the universal ribosomal protein uL1 family. Part of the 50S ribosomal subunit.

In terms of biological role, binds directly to 23S rRNA. Probably involved in E site tRNA release. Its function is as follows. Protein L1 is also a translational repressor protein, it controls the translation of its operon by binding to its mRNA. The protein is Large ribosomal subunit protein uL1 of Methanococcus maripaludis (strain C5 / ATCC BAA-1333).